Here is a 486-residue protein sequence, read N- to C-terminus: Ribulose bisphosphate carboxylase large chain (486 aa).

A propeptide spanning residues 1-2 is cleaved from the precursor; it reads MS. Substrate contacts are provided by N123 and T173. K175 acts as the Proton acceptor in catalysis. K177 provides a ligand contact to substrate. Residues K201, D203, and E204 each coordinate Mg(2+). Position 201 is an N6-carboxylysine (K201). A Phosphoserine modification is found at S208. The active-site Proton acceptor is H294. Substrate is bound by residues R295 and H327. Phosphothreonine is present on T330. S379 contributes to the substrate binding site.

It belongs to the RuBisCO large chain family. Type I subfamily. As to quaternary structure, heterohexadecamer of 8 large chains and 8 small chains; disulfide-linked. The disulfide link is formed within the large subunit homodimers. Requires Mg(2+) as cofactor. In terms of processing, the disulfide bond which can form in the large chain dimeric partners within the hexadecamer appears to be associated with oxidative stress and protein turnover.

The protein resides in the plastid. Its subcellular location is the chloroplast. It catalyses the reaction 2 (2R)-3-phosphoglycerate + 2 H(+) = D-ribulose 1,5-bisphosphate + CO2 + H2O. The catalysed reaction is D-ribulose 1,5-bisphosphate + O2 = 2-phosphoglycolate + (2R)-3-phosphoglycerate + 2 H(+). RuBisCO catalyzes two reactions: the carboxylation of D-ribulose 1,5-bisphosphate, the primary event in carbon dioxide fixation, as well as the oxidative fragmentation of the pentose substrate in the photorespiration process. Both reactions occur simultaneously and in competition at the same active site. This is Ribulose bisphosphate carboxylase large chain from Aethionema grandiflorum (Persian stone-cress).